The sequence spans 454 residues: Retinoblastoma-binding protein homolog 5 (454 aa).

6 WD repeats span residues 23-64, 65-104, 153-192, 196-235, 248-288, and 292-330; these read LQNA…RTFS, AHCLPVSCLSWSRDGRKLLTSSADNSIAMFDVLAGTLLHR, SSDESASCVSYDRKGKYIIAGTGKGKLLIYNAETLKCVAW, NTVQQIRQIIVPMKSRFIITNTQDRVIRTYELEDLLHQRG, VNKA…LIKI, and NKGEALLDVQWHPTRPIILSIAQGTVSMWTQAHVENWSA.

As to quaternary structure, component of the SET2 complex (also known as the SET1/COMPASS complex), which contains at least set-2, swd-2.1, cfp-1, rbbp-5, wdr-5.1, dpy-30 and ash-2.

Its subcellular location is the nucleus. Functionally, required for di- and trimethylation at 'Lys-4' of histone H3. Regulates left/right asymmetry of ASE sensory neurons, via its role as a component of the SET2 complex. This Caenorhabditis elegans protein is Retinoblastoma-binding protein homolog 5 (rbbp-5).